The sequence spans 390 residues: Pyruvate dehydrogenase E1 component subunit alpha, somatic form, mitochondrial (390 aa).

A mitochondrion-targeting transit peptide spans 1–29; it reads MRKMLAAVSRVLSGVAQKPASRVLVASRH. Residue Lys-63 is modified to N6-acetyllysine; alternate. The residue at position 63 (Lys-63) is an N6-succinyllysine; alternate. Pyruvate contacts are provided by His-92, Tyr-118, Arg-119, Ala-157, Gly-165, Val-167, Asp-196, Gly-197, Ala-198, Asn-225, and Tyr-227. Thiamine diphosphate contacts are provided by Tyr-118 and Arg-119. Thiamine diphosphate contacts are provided by Gly-165, Val-167, Asp-196, Gly-197, Ala-198, and Asn-225. Asp-196 provides a ligand contact to Mg(2+). Mg(2+) contacts are provided by Asn-225 and Tyr-227. Ser-232 is modified (phosphoserine; by PDK1). Lys-244 is modified (N6-acetyllysine; alternate). Lys-244 carries the N6-succinyllysine; alternate modification. Lys-267 is modified (N6-acetyllysine). Residue Lys-277 is modified to N6-succinyllysine. His-292 is a thiamine diphosphate binding site. The residue at position 293 (Ser-293) is a Phosphoserine; by PDK1, PDK2, PDK3 and PDK4. Phosphoserine is present on Ser-295. Ser-300 is subject to Phosphoserine; by PDK1, PDK2, PDK3 and PDK4. Tyr-301 bears the Phosphotyrosine mark. Lys-313 carries the N6-acetyllysine; alternate modification. The residue at position 313 (Lys-313) is an N6-succinyllysine; alternate. Residues Lys-321 and Lys-336 each carry the N6-acetyllysine modification. Lys-385 is subject to N6-succinyllysine.

As to quaternary structure, heterotetramer of two PDHA1 and two PDHB subunits. The heterotetramer interacts with DLAT, and is part of the multimeric pyruvate dehydrogenase complex that contains multiple copies of pyruvate dehydrogenase (E1), dihydrolipoamide acetyltransferase (DLAT, E2) and lipoamide dehydrogenase (DLD, E3). These subunits are bound to an inner core composed of about 48 DLAT and 12 PDHX molecules. Thiamine diphosphate is required as a cofactor. The cofactor is Mg(2+). Phosphorylation at Ser-232, Ser-293 and Ser-300 by PDK family kinases inactivates the enzyme; for this phosphorylation at a single site is sufficient. Phosphorylation at Ser-293 interferes with access to active site, and thereby inactivates the enzyme. Dephosphorylation at all three sites, i.e. at Ser-232, Ser-293 and Ser-300, is required for reactivation. Post-translationally, acetylation alters the phosphorylation pattern. Deacetylated by SIRT3.

It localises to the mitochondrion matrix. The enzyme catalyses N(6)-[(R)-lipoyl]-L-lysyl-[protein] + pyruvate + H(+) = N(6)-[(R)-S(8)-acetyldihydrolipoyl]-L-lysyl-[protein] + CO2. Its activity is regulated as follows. Pyruvate dehydrogenase activity is inhibited by phosphorylation of PDHA1; it is reactivated by dephosphorylation. Its function is as follows. The pyruvate dehydrogenase complex catalyzes the overall conversion of pyruvate to acetyl-CoA and CO(2), and thereby links the glycolytic pathway to the tricarboxylic cycle. This is Pyruvate dehydrogenase E1 component subunit alpha, somatic form, mitochondrial (PDHA1) from Bos taurus (Bovine).